Reading from the N-terminus, the 246-residue chain is Thaumatin-like protein 1 (246 aa).

An N-terminal signal peptide occupies residues 1–24 (MMKSQAALLGLTTLAILFFSGAHA). Intrachain disulfides connect C33–C245, C81–C91, C96–C103, C151–C234, C156–C217, C164–C180, C184–C193, and C194–C204.

This sequence belongs to the thaumatin family. In terms of tissue distribution, equally expressed in the abscission zone and surrounding tissues of both fruitlets and leaves.

The protein resides in the secreted. Its function is as follows. May be involved in protecting plant tissues from pathogen infection. This Prunus persica (Peach) protein is Thaumatin-like protein 1.